The following is a 195-amino-acid chain: Probable nicotinate-nucleotide adenylyltransferase (195 aa).

This sequence belongs to the NadD family.

The catalysed reaction is nicotinate beta-D-ribonucleotide + ATP + H(+) = deamido-NAD(+) + diphosphate. It participates in cofactor biosynthesis; NAD(+) biosynthesis; deamido-NAD(+) from nicotinate D-ribonucleotide: step 1/1. Its function is as follows. Catalyzes the reversible adenylation of nicotinate mononucleotide (NaMN) to nicotinic acid adenine dinucleotide (NaAD). This is Probable nicotinate-nucleotide adenylyltransferase from Mesorhizobium japonicum (strain LMG 29417 / CECT 9101 / MAFF 303099) (Mesorhizobium loti (strain MAFF 303099)).